Reading from the N-terminus, the 493-residue chain is 3-octaprenyl-4-hydroxybenzoate carboxy-lyase (493 aa).

A Mn(2+)-binding site is contributed by asparagine 172. Residues 175-177 (IYR), 189-191 (RWL), and 194-195 (RG) contribute to the prenylated FMN site. Glutamate 238 provides a ligand contact to Mn(2+). Residue aspartate 287 is the Proton donor of the active site.

It belongs to the UbiD family. In terms of assembly, homohexamer. It depends on prenylated FMN as a cofactor. Mn(2+) serves as cofactor.

The protein resides in the cell membrane. The enzyme catalyses a 4-hydroxy-3-(all-trans-polyprenyl)benzoate + H(+) = a 2-(all-trans-polyprenyl)phenol + CO2. It functions in the pathway cofactor biosynthesis; ubiquinone biosynthesis. Catalyzes the decarboxylation of 3-octaprenyl-4-hydroxy benzoate to 2-octaprenylphenol, an intermediate step in ubiquinone biosynthesis. This Shewanella loihica (strain ATCC BAA-1088 / PV-4) protein is 3-octaprenyl-4-hydroxybenzoate carboxy-lyase.